Here is a 583-residue protein sequence, read N- to C-terminus: Aspartate--tRNA(Asp/Asn) ligase (583 aa).

Position 171 (E171) interacts with L-aspartate. The tract at residues 195–198 is aspartate; it reads QLFK. Residue R217 coordinates L-aspartate. ATP is bound by residues 217–219 and Q226; that span reads RDE. H443 contributes to the L-aspartate binding site. E476 contributes to the ATP binding site. R483 contributes to the L-aspartate binding site. Residue 528-531 participates in ATP binding; it reads GLDR.

Belongs to the class-II aminoacyl-tRNA synthetase family. Type 1 subfamily. As to quaternary structure, homodimer.

The protein localises to the cytoplasm. The enzyme catalyses tRNA(Asx) + L-aspartate + ATP = L-aspartyl-tRNA(Asx) + AMP + diphosphate. Functionally, aspartyl-tRNA synthetase with relaxed tRNA specificity since it is able to aspartylate not only its cognate tRNA(Asp) but also tRNA(Asn). Reaction proceeds in two steps: L-aspartate is first activated by ATP to form Asp-AMP and then transferred to the acceptor end of tRNA(Asp/Asn). The protein is Aspartate--tRNA(Asp/Asn) ligase of Ruthia magnifica subsp. Calyptogena magnifica.